We begin with the raw amino-acid sequence, 288 residues long: Bifunctional protein FolD (288 aa).

Residues 166-168 (GRS), S191, and I232 each bind NADP(+).

This sequence belongs to the tetrahydrofolate dehydrogenase/cyclohydrolase family. Homodimer.

The catalysed reaction is (6R)-5,10-methylene-5,6,7,8-tetrahydrofolate + NADP(+) = (6R)-5,10-methenyltetrahydrofolate + NADPH. It carries out the reaction (6R)-5,10-methenyltetrahydrofolate + H2O = (6R)-10-formyltetrahydrofolate + H(+). The protein operates within one-carbon metabolism; tetrahydrofolate interconversion. Catalyzes the oxidation of 5,10-methylenetetrahydrofolate to 5,10-methenyltetrahydrofolate and then the hydrolysis of 5,10-methenyltetrahydrofolate to 10-formyltetrahydrofolate. The protein is Bifunctional protein FolD of Rickettsia canadensis (strain McKiel).